A 518-amino-acid chain; its full sequence is Mitochondrial 2-methylisocitrate lyase (518 aa).

It belongs to the isocitrate lyase/PEP mutase superfamily. Isocitrate lyase family.

It localises to the mitochondrion matrix. Its subcellular location is the cytoplasm. The catalysed reaction is (2S,3R)-3-hydroxybutane-1,2,3-tricarboxylate = pyruvate + succinate. It participates in organic acid metabolism; propanoate degradation. Catalyzes the formation of pyruvate and succinate from 2-methylisocitrate during the metabolism of endogenous propionyl-CoA. Does not act on isocitrate. The protein is Mitochondrial 2-methylisocitrate lyase (icl2) of Schizosaccharomyces pombe (strain 972 / ATCC 24843) (Fission yeast).